Reading from the N-terminus, the 435-residue chain is Glutamyl-tRNA reductase (435 aa).

Substrate is bound by residues 49–52, Ser-109, 114–116, and Gln-120; these read TCNR and ETQ. The active-site Nucleophile is Cys-50. Position 189-194 (189-194) interacts with NADP(+); the sequence is GAGEMS.

Belongs to the glutamyl-tRNA reductase family. In terms of assembly, homodimer.

It catalyses the reaction (S)-4-amino-5-oxopentanoate + tRNA(Glu) + NADP(+) = L-glutamyl-tRNA(Glu) + NADPH + H(+). It functions in the pathway porphyrin-containing compound metabolism; protoporphyrin-IX biosynthesis; 5-aminolevulinate from L-glutamyl-tRNA(Glu): step 1/2. In terms of biological role, catalyzes the NADPH-dependent reduction of glutamyl-tRNA(Glu) to glutamate 1-semialdehyde (GSA). The polypeptide is Glutamyl-tRNA reductase (Listeria innocua serovar 6a (strain ATCC BAA-680 / CLIP 11262)).